The primary structure comprises 393 residues: Protein Njmu-R1 (393 aa).

The disordered stretch occupies residues 1-74 (MLPSLQESLD…AETPSGDDFS (74 aa)). Serine 8 and serine 18 each carry phosphoserine. Acidic residues predominate over residues 9-24 (LDGDEKELESSEEGGS).

In terms of assembly, interacts with TBC1D23; this interaction may be indirect.

In terms of biological role, may have a role in spermatogenesis. The protein is Protein Njmu-R1 of Mus musculus (Mouse).